Here is a 90-residue protein sequence, read N- to C-terminus: uncharacterized protein (90 aa).

The helical transmembrane segment at V12–F32 threads the bilayer.

It localises to the membrane. This is an uncharacterized protein from Mycoplasma pneumoniae (strain ATCC 29342 / M129 / Subtype 1) (Mycoplasmoides pneumoniae).